The primary structure comprises 273 residues: Putative ABC transporter ATP-binding protein DVU_1056 (273 aa).

One can recognise an ABC transporter domain in the interval 10-242 (LSLDDIHFTY…IHHGGEVAHE (233 aa)). 44–51 (GHNGSGKT) lines the ATP pocket. Positions 234–273 (HHGGEVAHEHPSRGCCHQHDGSHHHAGHDDDHPHTSQTTE) are disordered. Basic and acidic residues predominate over residues 235–267 (HGGEVAHEHPSRGCCHQHDGSHHHAGHDDDHPH).

Belongs to the ABC transporter superfamily.

The protein localises to the cell inner membrane. Probably part of an ABC transporter complex. Responsible for energy coupling to the transport system. The protein is Putative ABC transporter ATP-binding protein DVU_1056 of Nitratidesulfovibrio vulgaris (strain ATCC 29579 / DSM 644 / CCUG 34227 / NCIMB 8303 / VKM B-1760 / Hildenborough) (Desulfovibrio vulgaris).